Reading from the N-terminus, the 96-residue chain is Prokineticin Bo8 (96 aa).

An N-terminal signal peptide occupies residues 1-19; that stretch reads MKCFAQIVVLLLVIAFSHG. Disulfide bonds link cysteine 26/cysteine 38, cysteine 32/cysteine 50, cysteine 37/cysteine 78, cysteine 60/cysteine 86, and cysteine 80/cysteine 95.

In terms of tissue distribution, expressed by the skin glands.

The protein localises to the secreted. In terms of biological role, potent agonist for both PKR1/PROKR1 and PKR2/PROKR2, and inducer of a potent and long-lasting hyperalgesia. Also potentiates capsaicin-induced TRPV1 current, when tested on DRG neurons. At subnanomolar concentrations, this protein both induces potent chemotaxis of macrophages and stimulates LPS-induced production of the pro-inflammatory cytokines IL-1 and IL-12. In vivo, potently stimulates the contraction of the guinea-pig gastrointestinal (GI) smooth muscle (nanomolar concentration). The polypeptide is Prokineticin Bo8 (Bombina orientalis (Oriental fire-bellied toad)).